The following is a 279-amino-acid chain: Diaminopimelate epimerase (279 aa).

2 residues coordinate substrate: Asn13 and Asn66. Cys75 acts as the Proton donor in catalysis. Residues 76–77 (GN), Asn162, Asn195, and 213–214 (ER) each bind substrate. The Proton acceptor role is filled by Cys222. 223 to 224 (GT) serves as a coordination point for substrate.

This sequence belongs to the diaminopimelate epimerase family. As to quaternary structure, homodimer.

It localises to the cytoplasm. It catalyses the reaction (2S,6S)-2,6-diaminopimelate = meso-2,6-diaminopimelate. It functions in the pathway amino-acid biosynthesis; L-lysine biosynthesis via DAP pathway; DL-2,6-diaminopimelate from LL-2,6-diaminopimelate: step 1/1. Catalyzes the stereoinversion of LL-2,6-diaminopimelate (L,L-DAP) to meso-diaminopimelate (meso-DAP), a precursor of L-lysine and an essential component of the bacterial peptidoglycan. This chain is Diaminopimelate epimerase, found in Synechocystis sp. (strain ATCC 27184 / PCC 6803 / Kazusa).